Reading from the N-terminus, the 155-residue chain is uncharacterized protein (155 aa).

Disordered regions lie at residues 1 to 22 and 110 to 155; these read MSSQ…TFTF and NKEP…DTQA. Position 2 is an N-acetylserine (Ser2). Ser136, Ser144, and Ser146 each carry phosphoserine. Positions 136–155 are enriched in acidic residues; sequence SDEDLDAESDSDGEDGDTQA.

This is an uncharacterized protein from Mus musculus (Mouse).